The following is a 529-amino-acid chain: uncharacterized protein (529 aa).

Aspartate 389 (nucleophile) is an active-site residue. Glutamate 392 is an active-site residue. Aspartate 459 (proton donor) is an active-site residue.

The protein belongs to the glycosyl hydrolase 31 family.

This is an uncharacterized protein from Pseudescherichia vulneris (Escherichia vulneris).